The sequence spans 221 residues: Leucyl/phenylalanyl-tRNA--protein transferase (221 aa).

The protein belongs to the L/F-transferase family.

It is found in the cytoplasm. The enzyme catalyses N-terminal L-lysyl-[protein] + L-leucyl-tRNA(Leu) = N-terminal L-leucyl-L-lysyl-[protein] + tRNA(Leu) + H(+). It carries out the reaction N-terminal L-arginyl-[protein] + L-leucyl-tRNA(Leu) = N-terminal L-leucyl-L-arginyl-[protein] + tRNA(Leu) + H(+). It catalyses the reaction L-phenylalanyl-tRNA(Phe) + an N-terminal L-alpha-aminoacyl-[protein] = an N-terminal L-phenylalanyl-L-alpha-aminoacyl-[protein] + tRNA(Phe). Its function is as follows. Functions in the N-end rule pathway of protein degradation where it conjugates Leu, Phe and, less efficiently, Met from aminoacyl-tRNAs to the N-termini of proteins containing an N-terminal arginine or lysine. This Phenylobacterium zucineum (strain HLK1) protein is Leucyl/phenylalanyl-tRNA--protein transferase.